We begin with the raw amino-acid sequence, 217 residues long: Sentrin-specific protease 8 (217 aa).

Met1 is subject to N-acetylmethionine. Residues 11–174 (SLLRQSDVSL…MYVICNTEAL (164 aa)) form a protease region. Residues His102 and Asp119 contribute to the active site. The Nucleophile role is filled by Cys163.

The protein belongs to the peptidase C48 family.

In terms of biological role, protease that catalyzes two essential functions in the NEDD8 pathway: processing of full-length NEDD8 to its mature form and deconjugation of NEDD8 from targeted proteins such as cullins or p53. The protein is Sentrin-specific protease 8 (Senp8) of Rattus norvegicus (Rat).